Reading from the N-terminus, the 591-residue chain is Ketol-acid reductoisomerase, chloroplastic (591 aa).

The segment at 1 to 20 (MAAATSSIAPSLSCPSPSSS) is disordered. Residues 1–52 (MAAATSSIAPSLSCPSPSSSSKTLWSSKARTLALPNIGFLSSSSKSLRSLTA) constitute a chloroplast transit peptide. Thr-53 carries the N-acetylthreonine modification. The region spanning 102–300 (VRGGRDLFKH…ALGSPFTFAT (199 aa)) is the KARI N-terminal Rossmann domain. Residues 123–130 (GVIGWGSQ), 156–161 (RKGSRS), and 195–199 (SDAAQ) each bind NADP(+). Residue His-220 is part of the active site. KARI C-terminal knotted domains lie at 301–449 (TLEQ…RPAG) and 450–586 (DLGP…RPEL). Residues Asp-309, Glu-313, Glu-486, and Glu-490 each coordinate Mg(2+). Ser-512 lines the substrate pocket.

The protein belongs to the ketol-acid reductoisomerase family. In terms of assembly, homodimer. The cofactor is Mg(2+).

It localises to the plastid. The protein resides in the chloroplast. The enzyme catalyses (2R)-2,3-dihydroxy-3-methylbutanoate + NADP(+) = (2S)-2-acetolactate + NADPH + H(+). The catalysed reaction is (2R,3R)-2,3-dihydroxy-3-methylpentanoate + NADP(+) = (S)-2-ethyl-2-hydroxy-3-oxobutanoate + NADPH + H(+). It participates in amino-acid biosynthesis; L-isoleucine biosynthesis; L-isoleucine from 2-oxobutanoate: step 2/4. Its pathway is amino-acid biosynthesis; L-valine biosynthesis; L-valine from pyruvate: step 2/4. The protein is Ketol-acid reductoisomerase, chloroplastic of Arabidopsis thaliana (Mouse-ear cress).